Here is a 118-residue protein sequence, read N- to C-terminus: Membrane-anchored ubiquitin-fold protein 3 (118 aa).

A Ubiquitin-like domain is found at 7–73 (IDIKFRLYDG…LENNKTVGQC (67 aa)). C113 carries the S-palmitoyl cysteine lipid modification. C115 carries the cysteine methyl ester modification. C115 carries S-geranylgeranyl cysteine lipidation. The propeptide at 116–118 (TIL) is removed in mature form.

Ubiquitous, but three fold higher expression in senescing leaves.

The protein resides in the cell membrane. In terms of biological role, may serve as docking site to facilitate the association of other proteins to the plasma membrane. This chain is Membrane-anchored ubiquitin-fold protein 3 (MUB3), found in Arabidopsis thaliana (Mouse-ear cress).